The following is a 417-amino-acid chain: Gamma-glutamyl phosphate reductase (417 aa).

This sequence belongs to the gamma-glutamyl phosphate reductase family.

It is found in the cytoplasm. It catalyses the reaction L-glutamate 5-semialdehyde + phosphate + NADP(+) = L-glutamyl 5-phosphate + NADPH + H(+). The protein operates within amino-acid biosynthesis; L-proline biosynthesis; L-glutamate 5-semialdehyde from L-glutamate: step 2/2. Catalyzes the NADPH-dependent reduction of L-glutamate 5-phosphate into L-glutamate 5-semialdehyde and phosphate. The product spontaneously undergoes cyclization to form 1-pyrroline-5-carboxylate. This Escherichia coli O17:K52:H18 (strain UMN026 / ExPEC) protein is Gamma-glutamyl phosphate reductase.